We begin with the raw amino-acid sequence, 150 residues long: Small heat shock protein IbpB (150 aa).

Positions 26-137 constitute a sHSP domain; that stretch reads SQEPIDFPPY…QPQRIAIGGG (112 aa).

It belongs to the small heat shock protein (HSP20) family. Homodimer. Forms homomultimers of about 100-150 subunits at optimal growth temperatures. Conformation changes to oligomers at high temperatures or high ionic concentrations. The decrease in size of the multimers is accompanied by an increase in chaperone activity.

Its subcellular location is the cytoplasm. Associates with aggregated proteins, together with IbpA, to stabilize and protect them from irreversible denaturation and extensive proteolysis during heat shock and oxidative stress. Aggregated proteins bound to the IbpAB complex are more efficiently refolded and reactivated by the ATP-dependent chaperone systems ClpB and DnaK/DnaJ/GrpE. Its activity is ATP-independent. This chain is Small heat shock protein IbpB, found in Pectobacterium atrosepticum (strain SCRI 1043 / ATCC BAA-672) (Erwinia carotovora subsp. atroseptica).